The primary structure comprises 334 residues: Putative heme-binding peroxidase (334 aa).

His40 functions as the Proton acceptor in the catalytic mechanism. Position 169 (His169) interacts with heme b. Catalysis depends on Trp185, which acts as the Tryptophan radical intermediate.

The protein belongs to the peroxidase family. Cytochrome c peroxidase subfamily. Heme b serves as cofactor.

Destroys radicals which are normally produced within the cells and which are toxic to biological systems. The protein is Putative heme-binding peroxidase of Cryptococcus neoformans var. neoformans serotype D (strain JEC21 / ATCC MYA-565) (Filobasidiella neoformans).